Here is a 138-residue protein sequence, read N- to C-terminus: F-box protein At4g12382 (138 aa).

Residues 7–53 (NPSFADLPSSLIEVIMSHLALKNNIRASAACKSWYEVGVSVRVVEKH) form the F-box domain.

This is F-box protein At4g12382 from Arabidopsis thaliana (Mouse-ear cress).